We begin with the raw amino-acid sequence, 198 residues long: UPF0301 protein Tfu_2389 (198 aa).

It belongs to the UPF0301 (AlgH) family.

The sequence is that of UPF0301 protein Tfu_2389 from Thermobifida fusca (strain YX).